The following is a 185-amino-acid chain: Ribosome-recycling factor (185 aa).

Belongs to the RRF family.

Its subcellular location is the cytoplasm. Functionally, responsible for the release of ribosomes from messenger RNA at the termination of protein biosynthesis. May increase the efficiency of translation by recycling ribosomes from one round of translation to another. In Dehalococcoides mccartyi (strain ATCC BAA-2266 / KCTC 15142 / 195) (Dehalococcoides ethenogenes (strain 195)), this protein is Ribosome-recycling factor.